The chain runs to 341 residues: Glyceraldehyde-3-phosphate dehydrogenase (341 aa).

NAD(+) is bound by residues threonine 11–isoleucine 12 and glycine 110. Serine 139–asparagine 141 lines the D-glyceraldehyde 3-phosphate pocket. The Nucleophile role is filled by cysteine 140. Arginine 168 contacts NAD(+). Histidine 194 to glycine 195 serves as a coordination point for D-glyceraldehyde 3-phosphate. NAD(+) is bound at residue glutamine 302.

It belongs to the glyceraldehyde-3-phosphate dehydrogenase family. Homotetramer.

The protein resides in the cytoplasm. It catalyses the reaction D-glyceraldehyde 3-phosphate + phosphate + NADP(+) = (2R)-3-phospho-glyceroyl phosphate + NADPH + H(+). The enzyme catalyses D-glyceraldehyde 3-phosphate + phosphate + NAD(+) = (2R)-3-phospho-glyceroyl phosphate + NADH + H(+). It functions in the pathway carbohydrate degradation; glycolysis; pyruvate from D-glyceraldehyde 3-phosphate: step 1/5. This is Glyceraldehyde-3-phosphate dehydrogenase from Methanoculleus marisnigri (strain ATCC 35101 / DSM 1498 / JR1).